The following is a 270-amino-acid chain: UPF0354 protein Bcer98_3354 (270 aa).

This sequence belongs to the UPF0354 family.

This is UPF0354 protein Bcer98_3354 from Bacillus cytotoxicus (strain DSM 22905 / CIP 110041 / 391-98 / NVH 391-98).